We begin with the raw amino-acid sequence, 270 residues long: MLRAVLLPTLLAFGAFTPVHGANSPGCGKQPTLTNGVNQINGREYVLKIPDGYDPSKPHHLIFGLHWRGGNMYNVVNGDSIQPWYGLEARAQGSAIFVAPNGLNAGWANTNGEDVAFIDAIMEQVEDDLCVDQASRFATGFSWGGGMSYALACARAAEFRAVSVLSGGLISGCDGGNDPIAYLGIHGINDPVLPLDGGVTLANTFVSNNGCQPTDIGQPASGSGGSVRTDFSGCSHPVSFIAYDGGHDGAPLGVGSSLAPDATWEFFMAA.

The first 21 residues, 1–21 (MLRAVLLPTLLAFGAFTPVHG), serve as a signal peptide directing secretion.

The protein belongs to the faeC family.

It localises to the secreted. The catalysed reaction is feruloyl-polysaccharide + H2O = ferulate + polysaccharide.. In terms of biological role, involved in degradation of plant cell walls. Hydrolyzes the feruloyl-arabinose ester bond in arabinoxylans, and the feruloyl-galactose ester bond in pectin. Active against paranitrophenyl-acetate, methyl ferulate and wheat arabinoxylan. The polypeptide is Feruloyl esterase C (faeC) (Emericella nidulans (strain FGSC A4 / ATCC 38163 / CBS 112.46 / NRRL 194 / M139) (Aspergillus nidulans)).